The following is a 178-amino-acid chain: Caveolin-1 (178 aa).

N-acetylserine is present on Ser-2. A Phosphoserine modification is found at Ser-2. A required for homooligomerization region spans residues Ser-2–Val-94. Residues Ser-2–Ser-104 lie on the Cytoplasmic side of the membrane. Position 5 is an N6-acetyllysine; alternate (Lys-5). Lys-5 participates in a covalent cross-link: Glycyl lysine isopeptide (Lys-Gly) (interchain with G-Cter in ubiquitin); alternate. Position 6 is a phosphotyrosine (Tyr-6). Ser-9 carries the phosphoserine modification. Tyr-14 carries the phosphotyrosine; by ABL1 modification. Phosphotyrosine is present on Tyr-25. Residues Lys-26, Lys-39, Lys-47, and Lys-57 each participate in a glycyl lysine isopeptide (Lys-Gly) (interchain with G-Cter in ubiquitin) cross-link. The segment at Asp-82 to Val-94 is interaction with CAVIN3. The segment at residues Ala-105–Leu-125 is an intramembrane region (helical). The Cytoplasmic portion of the chain corresponds to His-126–Ile-178. The segment at Val-131–Gln-142 is interacts with SPRY1, SPRY2, SPRY3 and SPRY4. 3 S-palmitoyl cysteine lipidation sites follow: Cys-133, Cys-143, and Cys-156. Residues Ser-149 to Phe-160 form an interacts with SPRY1, SPRY2, and SPRY4 region. The interval Phe-167–Ile-178 is interacts with SPRY1, SPRY2, SPRY3 and SPRY4.

The protein belongs to the caveolin family. As to quaternary structure, homooligomer. Interacts with GLIPR2. Interacts with NOSTRIN. Interacts with SNAP25 and STX1A. Interacts (via the N-terminus) with DPP4; the interaction is direct. Interacts with CTNNB1, CDH1 and JUP. Interacts with PACSIN2; this interaction induces membrane tubulation. Interacts with SLC7A9. Interacts with BMX and BTK. Interacts with TGFBR1. Interacts with CAVIN3 (via leucine-zipper domain) in a cholesterol-sensitive manner. Interacts with CAVIN1. Interacts with EHD2 in a cholesterol-dependent manner. Forms a ternary complex with UBXN6 and VCP; mediates CAV1 targeting to lysosomes for degradation. Interacts with ABCG1; this interaction regulates ABCG1-mediated cholesterol efflux. Interacts with NEU3; this interaction enhances NEU3 sialidase activity within caveola. Interacts (via C-terminus) with SPRY1, SPRY2 (via C-terminus), SPRY3, and SPRY4. Interacts with IGFBP5; this interaction allows trafficking of IGFBP5 from the plasma membrane to the nucleus. In terms of processing, phosphorylated at Tyr-14 by ABL1 in response to oxidative stress. Ubiquitinated. Undergo monoubiquitination and multi- and/or polyubiquitination. Monoubiquitination of N-terminal lysines promotes integration in a ternary complex with UBXN6 and VCP which promotes oligomeric CAV1 targeting to lysosomes for degradation. Ubiquitinated by ZNRF1; leading to degradation and modulation of the TLR4-mediated immune response.

It localises to the golgi apparatus membrane. Its subcellular location is the cell membrane. The protein resides in the membrane. It is found in the caveola. The protein localises to the membrane raft. Functionally, may act as a scaffolding protein within caveolar membranes. Forms a stable heterooligomeric complex with CAV2 that targets to lipid rafts and drives caveolae formation. Mediates the recruitment of CAVIN proteins (CAVIN1/2/3/4) to the caveolae. Interacts directly with G-protein alpha subunits and can functionally regulate their activity. Involved in the costimulatory signal essential for T-cell receptor (TCR)-mediated T-cell activation. Its binding to DPP4 induces T-cell proliferation and NF-kappa-B activation in a T-cell receptor/CD3-dependent manner. Recruits CTNNB1 to caveolar membranes and may regulate CTNNB1-mediated signaling through the Wnt pathway. Negatively regulates TGFB1-mediated activation of SMAD2/3 by mediating the internalization of TGFBR1 from membrane rafts leading to its subsequent degradation. Binds 20(S)-hydroxycholesterol (20(S)-OHC). The polypeptide is Caveolin-1 (CAV1) (Loxodonta africana (African elephant)).